The chain runs to 384 residues: uncharacterized protein (384 aa).

To S.pombe SpAC2E11.17.

This is an uncharacterized protein from Schizosaccharomyces pombe (strain 972 / ATCC 24843) (Fission yeast).